A 117-amino-acid polypeptide reads, in one-letter code: Immunoglobulin kappa variable 1D-12 (117 aa).

Residues 1 to 22 (MDMMVPAQLLGLLLLWFPGSRC) form the signal peptide. A framework-1 region spans residues 23-45 (DIQMTQSPSSVSASVGDRVTITC). The 94-residue stretch at 24 to 117 (IQMTQSPSSV…YYCQQANSFP (94 aa)) folds into the Ig-like domain. A disulfide bridge connects residues C45 and C110. Residues 46 to 56 (RASQGISSWLA) are complementarity-determining-1. The segment at 57 to 71 (WYQQKPGKAPKLLIY) is framework-2. The complementarity-determining-2 stretch occupies residues 72–78 (AASSLQS). Residues 79–110 (GVPSRFSGSGSGTDFTLTISSLQPEDFATYYC) form a framework-3 region. The tract at residues 111–117 (QQANSFP) is complementarity-determining-3.

As to quaternary structure, immunoglobulins are composed of two identical heavy chains and two identical light chains; disulfide-linked.

The protein localises to the secreted. It localises to the cell membrane. Its function is as follows. V region of the variable domain of immunoglobulin light chains that participates in the antigen recognition. Immunoglobulins, also known as antibodies, are membrane-bound or secreted glycoproteins produced by B lymphocytes. In the recognition phase of humoral immunity, the membrane-bound immunoglobulins serve as receptors which, upon binding of a specific antigen, trigger the clonal expansion and differentiation of B lymphocytes into immunoglobulins-secreting plasma cells. Secreted immunoglobulins mediate the effector phase of humoral immunity, which results in the elimination of bound antigens. The antigen binding site is formed by the variable domain of one heavy chain, together with that of its associated light chain. Thus, each immunoglobulin has two antigen binding sites with remarkable affinity for a particular antigen. The variable domains are assembled by a process called V-(D)-J rearrangement and can then be subjected to somatic hypermutations which, after exposure to antigen and selection, allow affinity maturation for a particular antigen. The protein is Immunoglobulin kappa variable 1D-12 of Homo sapiens (Human).